A 681-amino-acid polypeptide reads, in one-letter code: Transcriptional regulator prz1 (681 aa).

Over residues 1–15 the composition is skewed to basic and acidic residues; sequence MERQRSEEANRRFKD. Disordered regions lie at residues 1 to 29, 66 to 96, 340 to 372, 410 to 433, and 520 to 563; these read MERQ…SKPD, NPSK…DSYP, SHQS…NSPF, PQIN…ANPL, and KIEN…AKSE. Composition is skewed to polar residues over residues 66–86 and 340–358; these read NPSK…FKTS and SHQS…LNSE. A compositionally biased stretch (low complexity) spans 416 to 428; that stretch reads PSSPSKSQSGPSL. Polar residues predominate over residues 528-549; sequence SNDYLSVRNTRPRSRSLNSLVG. S543 and S546 each carry phosphoserine. Residues 550–559 show a composition bias toward low complexity; the sequence is NKSENSSSSK. C2H2-type zinc fingers lie at residues 570 to 594 and 600 to 622; these read YVCT…MNTH and FQCS…EQLH. Residues 628–650 form a C2H2-type 3; degenerate zinc finger; the sequence is FACVTCNQRFARMDALNRHYKSE. Positions 662 to 681 are disordered; the sequence is RGIQVPPSRKTAVASTSKQK.

It belongs to the EGR C2H2-type zinc-finger protein family. Post-translationally, phosphorylated. Dephosphorylated by calcineurin which leads to rapid translocation from the cytoplasm to the nucleus.

The protein localises to the nucleus. Its subcellular location is the cytoplasm. Functionally, involved in the regulation of calcium ion homeostasis. Binds to the calcineurin-dependent response element. Transcriptionally regulates pmc1. In Schizosaccharomyces pombe (strain 972 / ATCC 24843) (Fission yeast), this protein is Transcriptional regulator prz1 (prz1).